Consider the following 650-residue polypeptide: Threonine--tRNA ligase (650 aa).

Residues 5-67 (NKSMFIKLKD…QEGDQVILWG (63 aa)) form the TGS domain. The catalytic stretch occupies residues 246 to 537 (DHKLLGAKLD…LIEHYVGKFP (292 aa)). Zn(2+) contacts are provided by Cys337, His388, and His514.

Belongs to the class-II aminoacyl-tRNA synthetase family. In terms of assembly, homodimer. It depends on Zn(2+) as a cofactor.

It is found in the cytoplasm. The enzyme catalyses tRNA(Thr) + L-threonine + ATP = L-threonyl-tRNA(Thr) + AMP + diphosphate + H(+). Its function is as follows. Catalyzes the attachment of threonine to tRNA(Thr) in a two-step reaction: L-threonine is first activated by ATP to form Thr-AMP and then transferred to the acceptor end of tRNA(Thr). Also edits incorrectly charged L-seryl-tRNA(Thr). The sequence is that of Threonine--tRNA ligase from Protochlamydia amoebophila (strain UWE25).